A 674-amino-acid chain; its full sequence is Probable potassium transport system protein Kup (674 aa).

The next 12 helical transmembrane spans lie at 7 to 27 (IFWG…TSPL), 52 to 72 (LSLV…LIAL), 95 to 115 (WLIL…TLTP), 145 to 165 (LVTF…TSFI), 169 to 189 (FGPL…VNLI), 204 to 224 (LMLL…SVFL), 244 to 264 (IYLT…GQGA), 291 to 311 (VYLF…QALI), 342 to 362 (IYIR…LVYF), 368 to 388 (MEAA…ILLS), 397 to 417 (VVFN…FLIS), and 425 to 445 (GGYV…IWYF).

It belongs to the HAK/KUP transporter (TC 2.A.72) family.

Its subcellular location is the cell membrane. The catalysed reaction is K(+)(in) + H(+)(in) = K(+)(out) + H(+)(out). Its function is as follows. Transport of potassium into the cell. Likely operates as a K(+):H(+) symporter. This chain is Probable potassium transport system protein Kup, found in Ligilactobacillus salivarius (strain UCC118) (Lactobacillus salivarius).